Reading from the N-terminus, the 330-residue chain is tRNA-modifying protein YgfZ (330 aa).

Residues tryptophan 28 and tryptophan 190 each contribute to the folate site.

The protein belongs to the tRNA-modifying YgfZ family.

It localises to the cytoplasm. Functionally, folate-binding protein involved in regulating the level of ATP-DnaA and in the modification of some tRNAs. It is probably a key factor in regulatory networks that act via tRNA modification, such as initiation of chromosomal replication. The sequence is that of tRNA-modifying protein YgfZ from Yersinia pestis bv. Antiqua (strain Antiqua).